A 197-amino-acid polypeptide reads, in one-letter code: uncharacterized protein (197 aa).

2 disordered regions span residues 1–30 (MSDDLNDFFAKKDSTKKVVKKPTSTTPKVV) and 115–174 (PSLK…KQEL). Residues 21–30 (KPTSTTPKVV) show a composition bias toward low complexity. Positions 123-137 (KVDEDDDQIYEDKEE) are enriched in acidic residues. Basic residues predominate over residues 157–170 (KSNKKVAPKQKKKS).

This is an uncharacterized protein from Dictyostelium discoideum (Social amoeba).